The following is a 143-amino-acid chain: ATP synthase subunit b' (143 aa).

Residues 6–26 (ATLPLMALQFLVLAVVLNAVF) form a helical membrane-spanning segment.

The protein belongs to the ATPase B chain family. F-type ATPases have 2 components, F(1) - the catalytic core - and F(0) - the membrane proton channel. F(1) has five subunits: alpha(3), beta(3), gamma(1), delta(1), epsilon(1). F(0) has four main subunits: a(1), b(1), b'(1) and c(10-14). The alpha and beta chains form an alternating ring which encloses part of the gamma chain. F(1) is attached to F(0) by a central stalk formed by the gamma and epsilon chains, while a peripheral stalk is formed by the delta, b and b' chains.

The protein localises to the cellular thylakoid membrane. In terms of biological role, f(1)F(0) ATP synthase produces ATP from ADP in the presence of a proton or sodium gradient. F-type ATPases consist of two structural domains, F(1) containing the extramembraneous catalytic core and F(0) containing the membrane proton channel, linked together by a central stalk and a peripheral stalk. During catalysis, ATP synthesis in the catalytic domain of F(1) is coupled via a rotary mechanism of the central stalk subunits to proton translocation. Its function is as follows. Component of the F(0) channel, it forms part of the peripheral stalk, linking F(1) to F(0). The b'-subunit is a diverged and duplicated form of b found in plants and photosynthetic bacteria. The sequence is that of ATP synthase subunit b' from Gloeothece citriformis (strain PCC 7424) (Cyanothece sp. (strain PCC 7424)).